Consider the following 145-residue polypeptide: UPF0763 protein WS1752 (145 aa).

It belongs to the UPF0763 family.

This Wolinella succinogenes (strain ATCC 29543 / DSM 1740 / CCUG 13145 / JCM 31913 / LMG 7466 / NCTC 11488 / FDC 602W) (Vibrio succinogenes) protein is UPF0763 protein WS1752.